Reading from the N-terminus, the 332-residue chain is Aspartate carbamoyltransferase catalytic subunit (332 aa).

The interval Met-1 to Asp-20 is disordered. Residues Arg-72 and Thr-73 each coordinate carbamoyl phosphate. Lys-100 is an L-aspartate binding site. Residues Arg-122, His-152, and Gln-155 each contribute to the carbamoyl phosphate site. Residues Arg-186 and Arg-241 each coordinate L-aspartate. Residues Gly-282 and Pro-283 each coordinate carbamoyl phosphate.

Belongs to the aspartate/ornithine carbamoyltransferase superfamily. ATCase family. As to quaternary structure, heterododecamer (2C3:3R2) of six catalytic PyrB chains organized as two trimers (C3), and six regulatory PyrI chains organized as three dimers (R2).

The catalysed reaction is carbamoyl phosphate + L-aspartate = N-carbamoyl-L-aspartate + phosphate + H(+). The protein operates within pyrimidine metabolism; UMP biosynthesis via de novo pathway; (S)-dihydroorotate from bicarbonate: step 2/3. Catalyzes the condensation of carbamoyl phosphate and aspartate to form carbamoyl aspartate and inorganic phosphate, the committed step in the de novo pyrimidine nucleotide biosynthesis pathway. In Psychrobacter sp. (strain TAD1), this protein is Aspartate carbamoyltransferase catalytic subunit.